The primary structure comprises 98 residues: MTPTHMNITLAFTISLLGMLIYRSHLMASLLCLEGMMMSLFIMTAVMASNAHSPLINIMPIIMLVFAACEAAVGLALLVSISNTYGLDHINNLSLLQC.

3 helical membrane-spanning segments follow: residues 1–21, 26–46, and 61–81; these read MTPT…GMLI, LMAS…MTAV, and IIML…LVSI.

The protein belongs to the complex I subunit 4L family. Core subunit of respiratory chain NADH dehydrogenase (Complex I) which is composed of 45 different subunits.

The protein localises to the mitochondrion inner membrane. It catalyses the reaction a ubiquinone + NADH + 5 H(+)(in) = a ubiquinol + NAD(+) + 4 H(+)(out). Functionally, core subunit of the mitochondrial membrane respiratory chain NADH dehydrogenase (Complex I) which catalyzes electron transfer from NADH through the respiratory chain, using ubiquinone as an electron acceptor. Part of the enzyme membrane arm which is embedded in the lipid bilayer and involved in proton translocation. This chain is NADH-ubiquinone oxidoreductase chain 4L (MT-ND4L), found in Papio hamadryas (Hamadryas baboon).